A 530-amino-acid polypeptide reads, in one-letter code: Synembryn-like chaperone C3E7.04c (530 aa).

Residues 492–512 (SFIYHCYHSFVGPIHILLLMF) form a helical membrane-spanning segment.

This sequence belongs to the synembryn family.

The protein resides in the membrane. Functionally, chaperone that specifically binds and folds some, but not all, nascent G alpha proteins prior to G protein heterotrimer formation, promoting their stability and activity. Also acts as a guanine nucleotide exchange factor (GEF) for G alpha proteins by stimulating exchange of bound GDP for free GTP. This Schizosaccharomyces pombe (strain 972 / ATCC 24843) (Fission yeast) protein is Synembryn-like chaperone C3E7.04c.